The primary structure comprises 250 residues: 1-(5-phosphoribosyl)-5-[(5-phosphoribosylamino)methylideneamino] imidazole-4-carboxamide isomerase (250 aa).

Asp-8 functions as the Proton acceptor in the catalytic mechanism. Asp-131 functions as the Proton donor in the catalytic mechanism.

The protein belongs to the HisA/HisF family.

The protein resides in the cytoplasm. It catalyses the reaction 1-(5-phospho-beta-D-ribosyl)-5-[(5-phospho-beta-D-ribosylamino)methylideneamino]imidazole-4-carboxamide = 5-[(5-phospho-1-deoxy-D-ribulos-1-ylimino)methylamino]-1-(5-phospho-beta-D-ribosyl)imidazole-4-carboxamide. It functions in the pathway amino-acid biosynthesis; L-histidine biosynthesis; L-histidine from 5-phospho-alpha-D-ribose 1-diphosphate: step 4/9. The polypeptide is 1-(5-phosphoribosyl)-5-[(5-phosphoribosylamino)methylideneamino] imidazole-4-carboxamide isomerase (Paraburkholderia phymatum (strain DSM 17167 / CIP 108236 / LMG 21445 / STM815) (Burkholderia phymatum)).